A 262-amino-acid chain; its full sequence is [LysW]-aminoadipate/[LysW]-glutamate kinase (262 aa).

Substrate-binding positions include glycine 35–glycine 36, arginine 62, and asparagine 167.

Belongs to the acetylglutamate kinase family. LysZ subfamily.

The protein resides in the cytoplasm. It catalyses the reaction [amino-group carrier protein]-C-terminal-N-(1,4-dicarboxybutan-1-yl)-L-glutamine + ATP = [amino-group carrier protein]-C-terminal-N-(1-carboxy-5-phosphooxy-5-oxopentan-1-yl)-L-glutamine + ADP. The enzyme catalyses [amino-group carrier protein]-C-terminal-gamma-(L-glutamyl)-L-glutamate + ATP = [amino-group carrier protein]-C-terminal-gamma-(5-phospho-L-glutamyl)-L-glutamate + ADP. Its pathway is amino-acid biosynthesis; L-lysine biosynthesis via AAA pathway; L-lysine from L-alpha-aminoadipate (Thermus route): step 2/5. It functions in the pathway amino-acid biosynthesis; L-arginine biosynthesis. Functionally, involved in both the arginine and lysine biosynthetic pathways. Phosphorylates the LysW-bound precursors glutamate (for arginine biosynthesis), respectively alpha-aminoadipate (for lysine biosynthesis). The chain is [LysW]-aminoadipate/[LysW]-glutamate kinase from Metallosphaera sedula (strain ATCC 51363 / DSM 5348 / JCM 9185 / NBRC 15509 / TH2).